The primary structure comprises 441 residues: Eukaryotic translation initiation factor 3 subunit E (441 aa).

One can recognise a PCI domain in the interval 223 to 407; the sequence is IFFNHDNGRT…GTVIMEPTQP (185 aa).

This sequence belongs to the eIF-3 subunit E family. As to quaternary structure, component of the eukaryotic translation initiation factor 3 (eIF-3) complex (Potential). Binds to the translation initiation factors TIF3F1 and TIF3H1. Associates with the CSN (COP9 signalosome) complex. Interacts directly with CSN1, CSN4, CSN6A, CSN6B, CSN7, CSN8 and TIF3C1. Binds to 40S small ribosomal subunit S9 (RPS9B and RPS9C) via its N-terminal part. Interacts with the 26S proteasome subunit RPN12a via its C-terminal part. Also binds with At1g27930 and At4g30620.

It localises to the cytoplasm. The protein localises to the nucleus. Component of the eukaryotic translation initiation factor 3 (eIF-3) complex, which is involved in protein synthesis of a specialized repertoire of mRNAs and, together with other initiation factors, stimulates binding of mRNA and methionyl-tRNAi to the 40S ribosome. The eIF-3 complex specifically targets and initiates translation of a subset of mRNAs involved in cell proliferation (Potential). Negatively regulates translation during flower development. This Arabidopsis thaliana (Mouse-ear cress) protein is Eukaryotic translation initiation factor 3 subunit E.